The primary structure comprises 29 residues: MNFGMLKLLTVLIICYSNNFMRTRGGNGK.

Positions 1–15 (MNFGMLKLLTVLIIC) are cleaved as a signal peptide. Asn-27 is modified (asparagine amide).

Belongs to the limacoditoxin-12 family. In terms of tissue distribution, expressed by the venom secretory cell of the spine. The spine is a cuticular structure containing a single large nucleated venom-secreting cell at its base. It is an independent unit capable of producing, storing and injecting venom. On the back of D.vulnerans caterpillars, spines are grouped together by 50 to 100 to form scoli, of which there are eight in D.vulnerans.

The protein resides in the secreted. In terms of biological role, probable toxin. Does not show insecticidal, antimicrobial and antiparasitic activities. Does not induce increase in intracellular calcium in mouse DRG neurons, suggesting that it does not induce pain. In Doratifera vulnerans (Mottled cup moth), this protein is U-limacoditoxin(12)-Dv72.